A 565-amino-acid polypeptide reads, in one-letter code: Thiol:disulfide interchange protein DsbD (565 aa).

The N-terminal stretch at 1 to 19 is a signal peptide; it reads MAQRIFTLILLLCSTSVFA. The Periplasmic segment spans residues 20-162; sequence GLFDAPGRSQ…VPQQEQPTAQ (143 aa). 2 disulfides stabilise this stretch: Cys-122-Cys-128 and Cys-182-Cys-304. A helical membrane pass occupies residues 163–183; it reads LPFSALWALLIGIGIAFTPCV. Residues 184-207 are Cytoplasmic-facing; sequence LPMYPLISGIVLGGKQRLSTARAL. Residues 208-228 form a helical membrane-spanning segment; it reads LLTFIYVQGMALTYTALGLVV. The Periplasmic segment spans residues 229 to 242; that stretch reads AAAGLQFQAALQHP. A helical membrane pass occupies residues 243–263; sequence YVLIGLTIVFTLLAMSMFGLL. Residues 264-295 are Cytoplasmic-facing; the sequence is TLQLPSSLQTRLTLMSNRQQGGSPGGVFIMGT. The helical transmembrane segment at 296–316 threads the bilayer; it reads IAGLICSPCTTAPLSAILLYI. Residues 317–322 are Periplasmic-facing; sequence AQSGNM. A helical membrane pass occupies residues 323-343; that stretch reads WLGGGTLYLYALGMGLPLMLI. The Cytoplasmic portion of the chain corresponds to 344–356; sequence TVFGNRLLPKSGP. A helical transmembrane segment spans residues 357–377; that stretch reads WMEQVKTAFGFVILALPVFLL. At 378 to 383 the chain is on the periplasmic side; it reads ERVIGD. A helical transmembrane segment spans residues 384–404; the sequence is VWGLRLWSALGVAFFGWAFIT. Over 405–417 the chain is Cytoplasmic; sequence SLQAKRGWMRVVQ. Residues 418 to 438 traverse the membrane as a helical segment; the sequence is IILLAAALVSVRPLQDWAFGA. A Thioredoxin domain is found at 434-565; sequence WAFGATHTAQ…FSAHLRDRQP (132 aa). The Periplasmic segment spans residues 439–565; the sequence is THTAQTQTHL…FSAHLRDRQP (127 aa). Cysteines 480 and 483 form a disulfide.

This sequence belongs to the thioredoxin family. DsbD subfamily.

The protein localises to the cell inner membrane. The catalysed reaction is [protein]-dithiol + NAD(+) = [protein]-disulfide + NADH + H(+). It carries out the reaction [protein]-dithiol + NADP(+) = [protein]-disulfide + NADPH + H(+). Its function is as follows. Required to facilitate the formation of correct disulfide bonds in some periplasmic proteins and for the assembly of the periplasmic c-type cytochromes. Acts by transferring electrons from cytoplasmic thioredoxin to the periplasm. This transfer involves a cascade of disulfide bond formation and reduction steps. The polypeptide is Thiol:disulfide interchange protein DsbD (Escherichia coli O157:H7).